A 224-amino-acid chain; its full sequence is UPF0173 metal-dependent hydrolase STH3160 (224 aa).

The protein belongs to the UPF0173 family.

The protein is UPF0173 metal-dependent hydrolase STH3160 of Symbiobacterium thermophilum (strain DSM 24528 / JCM 14929 / IAM 14863 / T).